A 430-amino-acid chain; its full sequence is Retinoic acid receptor RXR-alpha-A (430 aa).

The span at 1 to 20 shows a compositional bias: low complexity; sequence MHPSLLSPTSLGPSGSLHSP. Disordered stretches follow at residues 1–25 and 48–73; these read MHPS…STLS and ASPG…SSSE. Residues 1 to 99 are modulating; that stretch reads MHPSLLSPTS…QPSGTPLSLT (99 aa). Over residues 58 to 72 the composition is skewed to polar residues; sequence ISPQLNSHMNSVSSS. Positions 100–175 form a DNA-binding region, nuclear receptor; the sequence is KHICAICGDR…MGMKREAVQE (76 aa). Cys-103, Cys-106, Cys-120, and Cys-123 together coordinate Zn(2+). The NR C4-type zinc-finger motif lies at 103–123; sequence CAICGDRSSGKHYGVYSCEGC. The nuclear localization signal stretch occupies residues 128 to 133; it reads KRTVRK. Residues Cys-139, Cys-145, Cys-155, and Cys-158 each coordinate Zn(2+). The segment at 139–158 adopts an NR C4-type zinc-finger fold; that stretch reads CRDNKDCVIDKRQRNRCQYC. The span at 174-186 shows a compositional bias: basic and acidic residues; it reads QEERQRAKERSEN. A disordered region spans residues 174–196; the sequence is QEERQRAKERSENEVESTSSANE. Residues 176 to 192 are hinge; sequence ERQRAKERSENEVESTS. In terms of domain architecture, NR LBD spans 195-426; the sequence is NEDMPVEKIL…TFLMEMLEAP (232 aa). 2 residues coordinate 9-cis-retinoate: Arg-284 and Ala-295. All-trans-retinoate-binding residues include Arg-284 and Ala-295. The tract at residues 316 to 336 is required for nuclear export; that stretch reads RVLTELVSKMRDMQMDKTELG. Positions 415–426 are AF-2; that stretch reads IDTFLMEMLEAP.

Belongs to the nuclear hormone receptor family. NR2 subfamily. In terms of assembly, homodimer. Heterodimer; with a rar molecule. Binds DNA preferentially as a rar/rxr heterodimer.

Its subcellular location is the nucleus. In terms of biological role, receptor for retinoic acid that acts as a transcription factor. Forms homo- or heterodimers with retinoic acid receptors (rars) and binds to target response elements in response to their ligands, all-trans or 9-cis retinoic acid, to regulate gene expression in various biological processes. The rar/rxr heterodimers bind to the retinoic acid response elements (RARE) composed of tandem 5'-AGGTCA-3' sites known as DR1-DR5 to regulate transcription. The high affinity ligand for rxrs is 9-cis retinoic acid. In the absence of ligand, the rar/rxr heterodimers associate with a multiprotein complex containing transcription corepressors that induce histone deacetylation, chromatin condensation and transcriptional suppression. On ligand binding, the corepressors dissociate from the receptors and coactivators are recruited leading to transcriptional activation. The chain is Retinoic acid receptor RXR-alpha-A from Danio rerio (Zebrafish).